A 511-amino-acid polypeptide reads, in one-letter code: cAMP-regulated M3L protein (511 aa).

To D.discoideum protein M3R.

This is cAMP-regulated M3L protein (prtA) from Dictyostelium discoideum (Social amoeba).